A 395-amino-acid chain; its full sequence is RNA polymerase II elongation factor ELL3 (395 aa).

2 disordered regions span residues 129-177 (LTEG…SEPM) and 189-281 (PSRE…SPEE). At S242 the chain carries Phosphoserine. Acidic residues predominate over residues 243 to 260 (QEGEDWGQDEDEEGDEDG). Over residues 269–279 (SAPSASESPSP) the composition is skewed to low complexity. One can recognise an OCEL domain in the interval 283-393 (PDYLLQYRAI…LILEFEEKNR (111 aa)).

The protein belongs to the ELL/occludin family. Component of the little elongation complex (LEC), at least composed of ELL (ELL, ELL2 or ELL3), ZC3H8, ICE1 and ICE2. Component of the super elongation complex (SEC), at least composed of EAF1, EAF2, CDK9, MLLT3/AF9, AFF (AFF1 or AFF4), the P-TEFb complex and ELL (ELL, ELL2 or ELL3). Interacts with AFF4. In terms of tissue distribution, actively expressed in embryonic stem cells (ES cells), while it is weakly expressed in differentiated cells.

The protein localises to the nucleus. In terms of biological role, enhancer-binding elongation factor that specifically binds enhancers in embryonic stem cells (ES cells), marks them, and is required for their future activation during stem cell specification. Elongation factor component of the super elongation complex (SEC), a complex required to increase the catalytic rate of RNA polymerase II transcription by suppressing transient pausing by the polymerase at multiple sites along the DNA. Component of the little elongation complex (LEC), a complex required to regulate small nuclear RNA (snRNA) gene transcription by RNA polymerase II and III. Does not only bind to enhancer regions of active genes, but also marks the enhancers that are in a poised or inactive state in ES cells and is required for establishing proper RNA polymerase II occupancy at developmentally regulated genes in a cohesin-dependent manner. Probably required for priming developmentally regulated genes for later recruitment of the super elongation complex (SEC), for transcriptional activation during differentiation. Required for recruitment of P-TEFb within SEC during differentiation. Probably preloaded on germ cell chromatin, suggesting that it may prime gene activation by marking enhancers as early as in the germ cells. Promoting epithelial-mesenchymal transition (EMT). The chain is RNA polymerase II elongation factor ELL3 (Ell3) from Mus musculus (Mouse).